A 241-amino-acid chain; its full sequence is 2,3,4,5-tetrahydropyridine-2,6-dicarboxylate N-acetyltransferase (241 aa).

The protein belongs to the transferase hexapeptide repeat family. DapH subfamily.

It carries out the reaction (S)-2,3,4,5-tetrahydrodipicolinate + acetyl-CoA + H2O = L-2-acetamido-6-oxoheptanedioate + CoA. It participates in amino-acid biosynthesis; L-lysine biosynthesis via DAP pathway; LL-2,6-diaminopimelate from (S)-tetrahydrodipicolinate (acetylase route): step 1/3. Its function is as follows. Catalyzes the transfer of an acetyl group from acetyl-CoA to tetrahydrodipicolinate. This Thermoanaerobacter pseudethanolicus (strain ATCC 33223 / 39E) (Clostridium thermohydrosulfuricum) protein is 2,3,4,5-tetrahydropyridine-2,6-dicarboxylate N-acetyltransferase.